Consider the following 245-residue polypeptide: 2,3-bisphosphoglycerate-dependent phosphoglycerate mutase (245 aa).

Substrate is bound by residues 9–16, 22–23, arginine 61, 88–91, lysine 99, 115–116, and 181–182; these read RHGESEWN, TG, ERHY, RR, and GN. The active-site Tele-phosphohistidine intermediate is histidine 10. Catalysis depends on glutamate 88, which acts as the Proton donor/acceptor.

The protein belongs to the phosphoglycerate mutase family. BPG-dependent PGAM subfamily.

The catalysed reaction is (2R)-2-phosphoglycerate = (2R)-3-phosphoglycerate. It participates in carbohydrate degradation; glycolysis; pyruvate from D-glyceraldehyde 3-phosphate: step 3/5. In terms of biological role, catalyzes the interconversion of 2-phosphoglycerate and 3-phosphoglycerate. The protein is 2,3-bisphosphoglycerate-dependent phosphoglycerate mutase of Nocardia farcinica (strain IFM 10152).